A 392-amino-acid chain; its full sequence is MNQPKSPITVLIVDDSPFMRLTLQKILSQDPEIKVLDTARDGKEGIEKLQALRPQVVTMDIEMPQIDGLQALGEIMRWQPTPIIILSALTTEGAQASVKALEAGAFDVVAKPSGGPGADIQALARDLIDKVKAAAQVNLGRLGKKGAVSRISSASGSRPPWTAGAASENTNRLSSPGSTSSTLGSAKGRSLDSGEALPKYPVEIVAIGTSTGGPSALQAVLTQLPGNLPVPVLVAQHMPPGFTAPLAQRLNGMSPLTIREGVHGEALKAGTIYFAPAGKQMQVQSRGSQLILHIGDESPITTLYHPSVDVMFMSLAKEVGKGTLGVVMTGMGNDGLRGMREIKERGGYAIAEAEETCVVYGMPRAIVDAGLANRVAPLGEIARHIVECVQRR.

A Response regulatory domain is found at 9 to 126 (TVLIVDDSPF…GADIQALARD (118 aa)). Asp60 carries the 4-aspartylphosphate modification. The interval 148–194 (VSRISSASGSRPPWTAGAASENTNRLSSPGSTSSTLGSAKGRSLDSG) is disordered. Positions 173-185 (LSSPGSTSSTLGS) are enriched in low complexity. The CheB-type methylesterase domain occupies 198-392 (PKYPVEIVAI…RHIVECVQRR (195 aa)). Active-site residues include Ser210, His237, and Asp334.

It belongs to the CheB family. In terms of processing, phosphorylated by CheA. Phosphorylation of the N-terminal regulatory domain activates the methylesterase activity.

The protein resides in the cytoplasm. It carries out the reaction [protein]-L-glutamate 5-O-methyl ester + H2O = L-glutamyl-[protein] + methanol + H(+). The enzyme catalyses L-glutaminyl-[protein] + H2O = L-glutamyl-[protein] + NH4(+). Its function is as follows. Involved in chemotaxis. Part of a chemotaxis signal transduction system that modulates chemotaxis in response to various stimuli. Catalyzes the demethylation of specific methylglutamate residues introduced into the chemoreceptors (methyl-accepting chemotaxis proteins or MCP) by CheR. Also mediates the irreversible deamidation of specific glutamine residues to glutamic acid. This chain is Protein-glutamate methylesterase/protein-glutamine glutaminase, found in Desulfitobacterium hafniense (strain Y51).